A 295-amino-acid polypeptide reads, in one-letter code: Ribosomal RNA small subunit methyltransferase A (295 aa).

S-adenosyl-L-methionine-binding residues include Asn29, Leu31, Gly56, Glu77, Asp102, and Asn128.

The protein belongs to the class I-like SAM-binding methyltransferase superfamily. rRNA adenine N(6)-methyltransferase family. RsmA subfamily.

It is found in the cytoplasm. The catalysed reaction is adenosine(1518)/adenosine(1519) in 16S rRNA + 4 S-adenosyl-L-methionine = N(6)-dimethyladenosine(1518)/N(6)-dimethyladenosine(1519) in 16S rRNA + 4 S-adenosyl-L-homocysteine + 4 H(+). Specifically dimethylates two adjacent adenosines (A1518 and A1519) in the loop of a conserved hairpin near the 3'-end of 16S rRNA in the 30S particle. May play a critical role in biogenesis of 30S subunits. The sequence is that of Ribosomal RNA small subunit methyltransferase A from Listeria welshimeri serovar 6b (strain ATCC 35897 / DSM 20650 / CCUG 15529 / CIP 8149 / NCTC 11857 / SLCC 5334 / V8).